We begin with the raw amino-acid sequence, 53 residues long: Conotoxin Ac4.3b (53 aa).

Residues 1-11 constitute a propeptide that is removed on maturation; it reads SDVRNAAVHER. Gln12 is subject to Pyrrolidone carboxylic acid. Glu14 bears the 4-carboxyglutamate mark. Ser18 carries an O-linked (HexNAc...) serine glycan. 3 positions are modified to 4-hydroxyproline: Pro28, Pro33, and Pro48. Pro48 carries the post-translational modification Proline amide. Positions 49-53 are excised as a propeptide; sequence GRRND.

This sequence belongs to the conotoxin A superfamily. Post-translationally, contains 3 disulfide bonds. As to expression, expressed by the venom duct.

Its subcellular location is the secreted. Functionally, probable neurotoxin with ion channel inhibitor activity. This is Conotoxin Ac4.3b from Conus achatinus (Little frog cone).